A 398-amino-acid chain; its full sequence is Ubiquitin-like modifier-activating enzyme 5 (398 aa).

The ATP site is built by Gly76, Asp97, Lys120, Asn143, and Asn177. Residues Cys219 and Cys222 each coordinate Zn(2+). The active-site Glycyl thioester intermediate is Cys243. Residues Cys296 and Cys301 each coordinate Zn(2+).

This sequence belongs to the ubiquitin-activating E1 family. UBA5 subfamily.

In terms of biological role, E1-like enzyme which activates UFM1. This Drosophila grimshawi (Hawaiian fruit fly) protein is Ubiquitin-like modifier-activating enzyme 5.